A 743-amino-acid polypeptide reads, in one-letter code: MSAPAADHNAAKPIPHVPQASRRYKNSYNGFVYNIHTWLYDVSVFLFNILFTIFFREIKVRGAYNVPEVGVPTILVCAPHANQFIDPALVMSQTRLLKTSAGKSRSRMPCFVTAESSFKKRFISFFGHAMGGIPVPRIQDNLKPVDENLEIYAPDLKNHPEIIKGRSKNPQTTPVNFTKRFSAKSLLGLPDYLSNAQIKEIPDDETIILSSPFRTSKSKVVELLTNGTNFKYAEKIDNTETFQSVFDHLHTKGCVGIFPEGGSHDRPSLLPIKAGVAIMALGAVAADPTMKVAVVPCGLHYFHRNKFRSRAVLEYGEPIVVDGKYGEMYKDSPRETVSKLLKKITNSLFSVTENAPDYDTLMVIQAARRLYQPVKVRLPLPAIVEINRRLLFGYSKFKDDPRIIHLKKLVYDYNRKLDSVGLKDHQVMQLKTTKLEALRCFVTLIVRLIKFSVFAILSLPGSILFTPIFIICRVYSEKKAKEGLKKSLVKIKGTDLLATWKLIVALILAPILYVTYSILLIILARKQHYCRIWVPSNNAFIQFVYFYALLVFTTYSSLKTGEIGVDLFKSLRPLFVSIVYPGKKIEEIQTTRKNLSLELTAVCNDLGPLVFPDYDKLATEIFSKRDGYDVSSDAESSISRMSVQSRSRSSSIHSIGSLASNALSRVNSRGSLTDIPIFSDAKQGQWKSEGETSEDEDEFDEKNPAIVQTARSSDLNKENSRNTNISSKIASLVRQKREHEKKE.

Residues 1-34 are Lumenal-facing; it reads MSAPAADHNAAKPIPHVPQASRRYKNSYNGFVYN. The helical transmembrane segment at 35-55 threads the bilayer; the sequence is IHTWLYDVSVFLFNILFTIFF. Residues 56–442 lie on the Cytoplasmic side of the membrane; the sequence is REIKVRGAYN…TKLEALRCFV (387 aa). A helical transmembrane segment spans residues 443-457; the sequence is TLIVRLIKFSVFAIL. Ser-458 is a topological domain (lumenal). Residues 459 to 473 form a helical membrane-spanning segment; the sequence is LPGSILFTPIFIICR. Over 474-501 the chain is Cytoplasmic; the sequence is VYSEKKAKEGLKKSLVKIKGTDLLATWK. Residues 502-522 form a helical membrane-spanning segment; that stretch reads LIVALILAPILYVTYSILLII. Topologically, residues 523–531 are lumenal; that stretch reads LARKQHYCR. The helical transmembrane segment at 532-552 threads the bilayer; the sequence is IWVPSNNAFIQFVYFYALLVF. Over 553-743 the chain is Cytoplasmic; it reads TTYSSLKTGE…RQKREHEKKE (191 aa). Phosphoserine is present on residues Ser-632, Ser-637, Ser-647, Ser-651, Ser-654, Ser-657, Ser-664, Ser-668, and Ser-671. At Thr-673 the chain carries Phosphothreonine. The tract at residues 682 to 743 is disordered; that stretch reads KQGQWKSEGE…RQKREHEKKE (62 aa). Ser-688 is subject to Phosphoserine. Residues 691–700 show a composition bias toward acidic residues; sequence ETSEDEDEFD. Phosphothreonine is present on Thr-692. The residue at position 693 (Ser-693) is a Phosphoserine.

It belongs to the GPAT/DAPAT family. Phosphorylated at a conserved motif involving Ser-664, Ser-668 and Ser-671. This phosphorylation plays a critical role for efficient TAG mobilization. Phosphorylation deficiency at this motif increases the enzyme activity and consequently induces de novo formation of phosphatidic acid.

The protein resides in the lipid droplet. The protein localises to the endoplasmic reticulum membrane. It carries out the reaction sn-glycerol 3-phosphate + an acyl-CoA = a 1-acyl-sn-glycero-3-phosphate + CoA. The catalysed reaction is dihydroxyacetone phosphate + an acyl-CoA = a 1-acylglycerone 3-phosphate + CoA. The enzyme catalyses sn-glycerol 3-phosphate + hexadecanoyl-CoA = 1-hexadecanoyl-sn-glycero-3-phosphate + CoA. It catalyses the reaction (9Z)-hexadecenoyl-CoA + sn-glycerol 3-phosphate = 1-(9Z-hexadecenoyl)-sn-glycero-3-phosphate + CoA. It carries out the reaction sn-glycerol 3-phosphate + octadecanoyl-CoA = 1-octadecanoyl-sn-glycero-3-phosphate + CoA. The catalysed reaction is sn-glycerol 3-phosphate + (9Z)-octadecenoyl-CoA = 1-(9Z-octadecenoyl)-sn-glycero-3-phosphate + CoA. Its pathway is phospholipid metabolism; CDP-diacylglycerol biosynthesis; CDP-diacylglycerol from sn-glycerol 3-phosphate: step 1/3. Its function is as follows. Dual substrate-specific glycerol-3-phosphate/dihydroxyacetone phosphate sn-1 acyltransferase, catalyzing the first and committed reaction in the de novo synthesis of glycerophospholipids and triacylglycerols (TAGs). Can use both Gly-3-P and dihydroxyacetone phosphate with similar efficiencies and has a broad fatty acyl-CoA specificity profile. Transfers a fatty acid from fatty acyl-CoA to the sn-1 position of glycerol-3-phosphate to produce lysophosphatidic acid (LysoPA). These lipids not only are precursors of glycerolipids, but also are dynamic components of signal transduction systems that control cell physiology. The protein is Glycerol-3-phosphate O-acyltransferase 2 (GPT2) of Saccharomyces cerevisiae (strain ATCC 204508 / S288c) (Baker's yeast).